Consider the following 509-residue polypeptide: MSFSPTYSIVMASPLLTSSQMIPTTGSTVGFRSILPFGSLRLTRPYKKTSLFISYCSSVSKKAKTSATDLKPVVERWPEYIPNKLSDKNYVRVYDTTLRDGEQAPGAALTPPQKIEIALQLAKLRVDVMEVGFPVSSEEEFETIKTIAKTVGNEVDEETGYVPVISALARSIQRDIEAAWESVKYAKRPRVGIFTPTSDIHMKYKLQKTREEVIEMVASSVRFAKSLGCKDIQFGCEDAGRSEKEFLCKILGEAIKAGATAVNVADTVGINMPEEYGELVRYLKANTPGIDDIVFSVHCHNDLGVATANTIAGVCAGARQVEVTVNGIGERSGNAPLEEVVMALKCRGAYVMDGVYTRIDTRQIMATSKMVQEYTGLYVQPHKPIVGANCFVHESGVHQDGILKNRSTYEILSPEDVGVVKSQNSGIVLGKLSGRHAVKDRLKELGYELDDEKFNDIFSRFRDLTKQKKRITDADLKALVTTCGDEKLNGANGKESNGYVPVPQISSMV.

Residues 1 to 55 (MSFSPTYSIVMASPLLTSSQMIPTTGSTVGFRSILPFGSLRLTRPYKKTSLFISY) constitute a chloroplast transit peptide. Residues 91-365 (VRVYDTTLRD…YTRIDTRQIM (275 aa)) enclose the Pyruvate carboxyltransferase domain. Mn(2+)-binding residues include Asp-100, His-298, and His-300.

It belongs to the alpha-IPM synthase/homocitrate synthase family. Monomer. It depends on Mn(2+) as a cofactor. Co(2+) serves as cofactor.

The protein resides in the plastid. It is found in the chloroplast. It catalyses the reaction 4-methylsulfanyl-2-oxobutanoate + acetyl-CoA + H2O = 2-(2-methylsulfanyl)ethylmalate + CoA + H(+). It functions in the pathway secondary metabolite biosynthesis. Its activity is regulated as follows. Inhibited by EDTA, Cu(2+) and Zn(2+). In terms of biological role, determines the side chain length of aliphatic glucosinolate structures. Involved in the biosynthesis of glucosinolate derivative natural products such as 6-(methylsulfinyl)hexylisothiocyanate (6-MSITC), a compound found in wasabi with diverse health-promoting properties. Catalyzes the conversion of 4-methylsulfanyl-2-oxobutanoate (4-MTOB) into 2-(2-methylsulfanyl)ethylmalate (2-(2-MT)EM). The polypeptide is Methylthioalkylmalate synthase 1-1, chloroplastic (Eutrema japonicum (Wasabi plant)).